Consider the following 267-residue polypeptide: Glucosamine-6-phosphate deaminase (267 aa).

Residue aspartate 72 is the Proton acceptor; for enolization step of the active site. Aspartate 141 (for ring-opening step) is an active-site residue. The active-site Proton acceptor; for ring-opening step is the histidine 143. Glutamate 148 acts as the For ring-opening step in catalysis.

It belongs to the glucosamine/galactosamine-6-phosphate isomerase family. NagB subfamily. As to quaternary structure, homohexamer.

The catalysed reaction is alpha-D-glucosamine 6-phosphate + H2O = beta-D-fructose 6-phosphate + NH4(+). It functions in the pathway amino-sugar metabolism; N-acetylneuraminate degradation; D-fructose 6-phosphate from N-acetylneuraminate: step 5/5. With respect to regulation, allosterically activated by N-acetylglucosamine 6-phosphate (GlcNAc6P). Its function is as follows. Catalyzes the reversible isomerization-deamination of glucosamine 6-phosphate (GlcN6P) to form fructose 6-phosphate (Fru6P) and ammonium ion. In Actinobacillus pleuropneumoniae serotype 5b (strain L20), this protein is Glucosamine-6-phosphate deaminase.